The following is a 216-amino-acid chain: 3-keto-L-gulonate-6-phosphate decarboxylase UlaD (216 aa).

Position 11 (Asp11) interacts with substrate. 2 residues coordinate Mg(2+): Glu33 and Asp62. A substrate-binding site is contributed by Arg192.

This sequence belongs to the HPS/KGPDC family. KGPDC subfamily. Homodimer. It depends on Mg(2+) as a cofactor.

It carries out the reaction 3-dehydro-L-gulonate 6-phosphate + H(+) = L-xylulose 5-phosphate + CO2. The protein operates within cofactor degradation; L-ascorbate degradation; D-xylulose 5-phosphate from L-ascorbate: step 2/4. Functionally, catalyzes the decarboxylation of 3-keto-L-gulonate-6-P into L-xylulose-5-P. Is involved in the anaerobic L-ascorbate utilization. The sequence is that of 3-keto-L-gulonate-6-phosphate decarboxylase UlaD from Shigella boydii serotype 18 (strain CDC 3083-94 / BS512).